The sequence spans 142 residues: Deoxyuridine 5'-triphosphate nucleotidohydrolase (142 aa).

Substrate-binding positions include 62 to 64, asparagine 75, and 79 to 81; these read RSG and TID.

Belongs to the dUTPase family. The cofactor is Mg(2+).

It catalyses the reaction dUTP + H2O = dUMP + diphosphate + H(+). The protein operates within pyrimidine metabolism; dUMP biosynthesis; dUMP from dCTP (dUTP route): step 2/2. In terms of biological role, this enzyme is involved in nucleotide metabolism: it produces dUMP, the immediate precursor of thymidine nucleotides and it decreases the intracellular concentration of dUTP so that uracil cannot be incorporated into DNA. This is Deoxyuridine 5'-triphosphate nucleotidohydrolase from Picosynechococcus sp. (strain ATCC 27264 / PCC 7002 / PR-6) (Agmenellum quadruplicatum).